A 512-amino-acid polypeptide reads, in one-letter code: GMP synthase [glutamine-hydrolyzing] (512 aa).

The region spanning 7–197 (TIIVLDFGSQ…VFGVCGCSEG (191 aa)) is the Glutamine amidotransferase type-1 domain. Cys84 functions as the Nucleophile in the catalytic mechanism. Active-site residues include His171 and Glu173. The GMPS ATP-PPase domain occupies 198–387 (WNMENFIEVE…LGIPDEIVWR (190 aa)). Residue 225–231 (SGGVDSS) participates in ATP binding.

Homodimer.

It carries out the reaction XMP + L-glutamine + ATP + H2O = GMP + L-glutamate + AMP + diphosphate + 2 H(+). Its pathway is purine metabolism; GMP biosynthesis; GMP from XMP (L-Gln route): step 1/1. Its function is as follows. Catalyzes the synthesis of GMP from XMP. In Bacillus cereus (strain G9842), this protein is GMP synthase [glutamine-hydrolyzing].